Reading from the N-terminus, the 407-residue chain is MLFDKVKAFSVQLDGATAGVEPVFSGGQAVAGRVLLELSSAARVGALRLRARGRAHVHWTESRSAGSSTAYTQSYSERVEVVSHRATLLAPDTGETTTLPPGRHEFLFSFQLPPTLVTSFEGKHGSVRYCIKATLHRPWVPARRARKVFTVIEPVDINTPALLAPQAGAREKVARSWYCNRGLVSLSAKIDRKGYTPGEVIPVFAEIDNGSTRPVLPRAAVVQTQTFMARGARKQKRAVVASLAGEPVGPGQRALWQGRALRIPPVGPSILHCRVLHVDYALKVCVDIPGTSKLLLELPLVIGTIPLHPFGSRSSSVGSHASFLLDWRLGALPERPEAPPEYSEVVADTEEAALGQSPFPLPQDPDMSLEGPFFAYIQEFRYRPPPLYSEEDPNPLLGDMRPRCMTC.

This sequence belongs to the arrestin family. In terms of assembly, interacts with WWP1 (via WW domains).

This chain is Arrestin domain-containing protein 2 (ARRDC2), found in Homo sapiens (Human).